Reading from the N-terminus, the 62-residue chain is Arabinogalactan protein 40 (62 aa).

The N-terminal stretch at 1–22 (MEMKNIFVALFISAVLVSSVSA) is a signal peptide. Pro28, Pro30, and Pro32 each carry 4-hydroxyproline. O-linked (Ara...) hydroxyproline glycosylation is found at Pro28, Pro30, and Pro32. Ser35 carries the GPI-anchor amidated serine lipid modification. Positions 36 to 62 (SASTVAFPVVGSIVAASLSAFLALLLQ) are cleaved as a propeptide — removed in mature form.

The protein belongs to the AG-peptide AGP family. Post-translationally, contains 4-hydroxyproline; hydroxylated on Pro-28, Pro-30 and Pro-32. In terms of processing, O-glycosylated on hydroxyprolines; noncontiguous hydroxylproline residues are glycosylated with arabinogalactan.

It is found in the cell membrane. Its function is as follows. Proteoglycan that seems to be implicated in diverse developmental roles such as differentiation, cell-cell recognition, embryogenesis and programmed cell death. In Arabidopsis thaliana (Mouse-ear cress), this protein is Arabinogalactan protein 40.